A 607-amino-acid polypeptide reads, in one-letter code: UvrABC system protein C (607 aa).

The 80-residue stretch at 15–94 (ENPGVYLMKN…IKRHRPYFNV (80 aa)) folds into the GIY-YIG domain. The region spanning 204–239 (DQVLKLLIRLMNEASARLDYETAALRRDQIASIKEV) is the UVR domain.

Belongs to the UvrC family. In terms of assembly, interacts with UvrB in an incision complex.

It localises to the cytoplasm. Its function is as follows. The UvrABC repair system catalyzes the recognition and processing of DNA lesions. UvrC both incises the 5' and 3' sides of the lesion. The N-terminal half is responsible for the 3' incision and the C-terminal half is responsible for the 5' incision. This chain is UvrABC system protein C, found in Dehalococcoides mccartyi (strain CBDB1).